Reading from the N-terminus, the 424-residue chain is Tyrosine--tRNA ligase (424 aa).

An L-tyrosine-binding site is contributed by Y37. A 'HIGH' region motif is present at residues 42 to 51 (ITADSLHVGH). Residues Y175 and Q179 each contribute to the L-tyrosine site. The short motif at 235 to 239 (KFGKT) is the 'KMSKS' region element. K238 is a binding site for ATP. One can recognise an S4 RNA-binding domain in the interval 356–414 (GNLQQLLVYSRLALSRSHAKSMIVSNSVRINNIIQNNPFYILCNRDKMYHKYTLLSRGK).

It belongs to the class-I aminoacyl-tRNA synthetase family. TyrS type 1 subfamily. In terms of assembly, homodimer.

The protein localises to the cytoplasm. The catalysed reaction is tRNA(Tyr) + L-tyrosine + ATP = L-tyrosyl-tRNA(Tyr) + AMP + diphosphate + H(+). Functionally, catalyzes the attachment of tyrosine to tRNA(Tyr) in a two-step reaction: tyrosine is first activated by ATP to form Tyr-AMP and then transferred to the acceptor end of tRNA(Tyr). This Buchnera aphidicola subsp. Baizongia pistaciae (strain Bp) protein is Tyrosine--tRNA ligase.